Reading from the N-terminus, the 285-residue chain is Golgi phosphoprotein 3-like (285 aa).

Positions Met1 to Lys42 are disordered. Residues Arg10 to Lys42 are compositionally biased toward basic and acidic residues. Residues Trp67 and Arg76 each coordinate a 1,2-diacyl-sn-glycero-3-phospho-(1D-myo-inositol 4-phosphate). Ser112 carries the post-translational modification Phosphoserine. Residues Arg157 and Arg160 each contribute to the a 1,2-diacyl-sn-glycero-3-phospho-(1D-myo-inositol 4-phosphate) site. Residues Glu176–Thr187 form a beta-hairpin required for oligomerization region.

This sequence belongs to the GOLPH3/VPS74 family. In terms of assembly, homooligomer. Does not interact MYO18; differs from GOLPH3 by its inability to interact with MYO18. May interact with ARF1.

The protein localises to the golgi apparatus. It is found in the golgi stack membrane. It localises to the trans-Golgi network membrane. Functionally, phosphatidylinositol-4-phosphate-binding protein that may antagonize the action of GOLPH3 which is required for the process of vesicle budding at the Golgi and anterograde transport to the plasma membrane. This chain is Golgi phosphoprotein 3-like (GOLPH3L), found in Homo sapiens (Human).